Consider the following 706-residue polypeptide: Probable E3 ubiquitin ligase complex SCF subunit sconB (706 aa).

The segment covering 1–12 has biased composition (basic and acidic residues); sequence MQSDDRSVREGS. 2 disordered regions span residues 1–43 and 56–76; these read MQSD…LLQQ and TAEEIDTETDSNHRRPHSFGA. Low complexity predominate over residues 34 to 43; it reads QQQQQQLLQQ. In terms of domain architecture, F-box spans 203-249; that stretch reads IDFLTALPPEISFKILCYLDTTSLCKAAQVSSRWRALADDDVVWHRM. WD repeat units follow at residues 377 to 414, 417 to 456, 458 to 494, 496 to 537, 589 to 632, 635 to 672, and 675 to 706; these read GHTNGVMCLQFEDNILATGSYDATIKIWDTETGEELRT, GHQSGIRCLQFDDTKLISGSMDRSLKVWNWRTGECISTYT, HRGGVIGLHFDATILASASVDKTVKIWNFEDKSTFLL, GHTD…RTFH, ATET…CLRT, GHLEGVWALGADTLRIVSGAEDRMVKIWDPRTGKCERT, and GHSGPVTCIGLGDSRFATGSEDCEVRMYSFRN.

Belongs to the WD repeat MET30/SCONB/SCON-2 family. Component of the SCF(sconB) E3 ubiquitin ligase complex.

It participates in protein modification; protein ubiquitination. Component of the SCF(sconB) E3 ubiquitin ligase complex involved in the regulation of sulfur metabolite repression, probably by mediating the inactivation or degradation of the metR transcription factor. The polypeptide is Probable E3 ubiquitin ligase complex SCF subunit sconB (sconB) (Aspergillus flavus (strain ATCC 200026 / FGSC A1120 / IAM 13836 / NRRL 3357 / JCM 12722 / SRRC 167)).